The primary structure comprises 477 residues: Glycogen synthase (477 aa).

K15 is an ADP-alpha-D-glucose binding site.

The protein belongs to the glycosyltransferase 1 family. Bacterial/plant glycogen synthase subfamily.

The catalysed reaction is [(1-&gt;4)-alpha-D-glucosyl](n) + ADP-alpha-D-glucose = [(1-&gt;4)-alpha-D-glucosyl](n+1) + ADP + H(+). It functions in the pathway glycan biosynthesis; glycogen biosynthesis. Its function is as follows. Synthesizes alpha-1,4-glucan chains using ADP-glucose. This Klebsiella pneumoniae subsp. pneumoniae (strain ATCC 700721 / MGH 78578) protein is Glycogen synthase.